A 423-amino-acid chain; its full sequence is Imidazolonepropionase (423 aa).

Fe(3+) contacts are provided by His87 and His89. 2 residues coordinate Zn(2+): His87 and His89. Arg96, Tyr159, and His192 together coordinate 4-imidazolone-5-propanoate. N-formimidoyl-L-glutamate is bound at residue Tyr159. His257 contributes to the Fe(3+) binding site. His257 is a binding site for Zn(2+). Glu260 provides a ligand contact to 4-imidazolone-5-propanoate. Asp331 contributes to the Fe(3+) binding site. Asp331 contributes to the Zn(2+) binding site. Asn333 and Gly335 together coordinate N-formimidoyl-L-glutamate. 4-imidazolone-5-propanoate is bound at residue Ser336.

It belongs to the metallo-dependent hydrolases superfamily. HutI family. Requires Zn(2+) as cofactor. The cofactor is Fe(3+).

It is found in the cytoplasm. The catalysed reaction is 4-imidazolone-5-propanoate + H2O = N-formimidoyl-L-glutamate. It functions in the pathway amino-acid degradation; L-histidine degradation into L-glutamate; N-formimidoyl-L-glutamate from L-histidine: step 3/3. In terms of biological role, catalyzes the hydrolytic cleavage of the carbon-nitrogen bond in imidazolone-5-propanoate to yield N-formimidoyl-L-glutamate. It is the third step in the universal histidine degradation pathway. The sequence is that of Imidazolonepropionase from Porphyromonas gingivalis (strain ATCC BAA-308 / W83).